A 167-amino-acid polypeptide reads, in one-letter code: 6,7-dimethyl-8-ribityllumazine synthase (167 aa).

5-amino-6-(D-ribitylamino)uracil is bound by residues F23, 57 to 59 (TYE), and 81 to 83 (AVI). 86–87 (GT) provides a ligand contact to (2S)-2-hydroxy-3-oxobutyl phosphate. The active-site Proton donor is the H89. Position 119 (F119) interacts with 5-amino-6-(D-ribitylamino)uracil. R133 is a binding site for (2S)-2-hydroxy-3-oxobutyl phosphate.

It belongs to the DMRL synthase family.

It catalyses the reaction (2S)-2-hydroxy-3-oxobutyl phosphate + 5-amino-6-(D-ribitylamino)uracil = 6,7-dimethyl-8-(1-D-ribityl)lumazine + phosphate + 2 H2O + H(+). It participates in cofactor biosynthesis; riboflavin biosynthesis; riboflavin from 2-hydroxy-3-oxobutyl phosphate and 5-amino-6-(D-ribitylamino)uracil: step 1/2. In terms of biological role, catalyzes the formation of 6,7-dimethyl-8-ribityllumazine by condensation of 5-amino-6-(D-ribitylamino)uracil with 3,4-dihydroxy-2-butanone 4-phosphate. This is the penultimate step in the biosynthesis of riboflavin. The chain is 6,7-dimethyl-8-ribityllumazine synthase from Myxococcus xanthus (strain DK1622).